The chain runs to 56 residues: Ovomucoid (56 aa).

Residues 6 to 56 (VDCSEYPKPACTLEYVPICGSDNKTYGNKCNFCNAVVESNGTLTLSHFGKC) enclose the Kazal-like domain. Intrachain disulfides connect C8-C38, C16-C35, and C24-C56. Residue N45 is glycosylated (N-linked (GlcNAc...) asparagine).

It is found in the secreted. The chain is Ovomucoid from Cyrtonyx montezumae (Montezuma quail).